The following is a 512-amino-acid chain: 2,3-bisphosphoglycerate-independent phosphoglycerate mutase (512 aa).

Residues Asp-12 and Ser-62 each coordinate Mn(2+). The active-site Phosphoserine intermediate is the Ser-62. Substrate-binding positions include His-123, 153–154 (RD), Arg-185, Arg-191, 260–263 (RPDR), and Lys-333. Mn(2+) contacts are provided by Asp-400, His-404, Asp-441, His-442, and His-460.

Belongs to the BPG-independent phosphoglycerate mutase family. As to quaternary structure, monomer. Requires Mn(2+) as cofactor.

It catalyses the reaction (2R)-2-phosphoglycerate = (2R)-3-phosphoglycerate. The protein operates within carbohydrate degradation; glycolysis; pyruvate from D-glyceraldehyde 3-phosphate: step 3/5. In terms of biological role, catalyzes the interconversion of 2-phosphoglycerate and 3-phosphoglycerate. The sequence is that of 2,3-bisphosphoglycerate-independent phosphoglycerate mutase from Clostridium beijerinckii (strain ATCC 51743 / NCIMB 8052) (Clostridium acetobutylicum).